We begin with the raw amino-acid sequence, 172 residues long: Adenine phosphoribosyltransferase (172 aa).

This sequence belongs to the purine/pyrimidine phosphoribosyltransferase family. In terms of assembly, homodimer.

Its subcellular location is the cytoplasm. The enzyme catalyses AMP + diphosphate = 5-phospho-alpha-D-ribose 1-diphosphate + adenine. It participates in purine metabolism; AMP biosynthesis via salvage pathway; AMP from adenine: step 1/1. Catalyzes a salvage reaction resulting in the formation of AMP, that is energically less costly than de novo synthesis. This is Adenine phosphoribosyltransferase from Rippkaea orientalis (strain PCC 8801 / RF-1) (Cyanothece sp. (strain PCC 8801)).